Reading from the N-terminus, the 431-residue chain is Gamma-glutamyl phosphate reductase (431 aa).

The protein belongs to the gamma-glutamyl phosphate reductase family.

It localises to the cytoplasm. It carries out the reaction L-glutamate 5-semialdehyde + phosphate + NADP(+) = L-glutamyl 5-phosphate + NADPH + H(+). It participates in amino-acid biosynthesis; L-proline biosynthesis; L-glutamate 5-semialdehyde from L-glutamate: step 2/2. Its function is as follows. Catalyzes the NADPH-dependent reduction of L-glutamate 5-phosphate into L-glutamate 5-semialdehyde and phosphate. The product spontaneously undergoes cyclization to form 1-pyrroline-5-carboxylate. The polypeptide is Gamma-glutamyl phosphate reductase (Acaryochloris marina (strain MBIC 11017)).